The primary structure comprises 213 residues: Peroxynitrite isomerase 2 (213 aa).

A GXWXGXG motif is present at residues Gly-58–Gly-64. 2 residues coordinate heme b: Lys-176 and His-203.

This sequence belongs to the nitrobindin family. Homodimer. Heme b serves as cofactor.

The enzyme catalyses peroxynitrite = nitrate. Its pathway is nitrogen metabolism. Heme-binding protein able to scavenge peroxynitrite and to protect free L-tyrosine against peroxynitrite-mediated nitration, by acting as a peroxynitrite isomerase that converts peroxynitrite to nitrate. Therefore, this protein likely plays a role in peroxynitrite sensing and in the detoxification of reactive nitrogen and oxygen species (RNS and ROS, respectively). Is able to bind nitric oxide (NO) in vitro, but may act as a sensor of peroxynitrite levels in vivo. The polypeptide is Peroxynitrite isomerase 2 (Rhodococcus jostii (strain RHA1)).